A 209-amino-acid chain; its full sequence is Ancillary SecYEG translocon subunit (209 aa).

The Cytoplasmic portion of the chain corresponds to 1–23 (MAAHLEEQQELDNFKYFWKTTGK). A helical transmembrane segment spans residues 24–42 (WLFALLILAALGYLGYTVY). Residues 43–209 (QNRAASQNQE…LLQMKLDSLK (167 aa)) lie on the Periplasmic side of the membrane. One copy of the TPR repeat lies at 161–194 (PLLMETKGDVYAAQEKSQEALKNYGQALEKMPQD).

It belongs to the YfgM family. As to quaternary structure, interacts with the SecYEG translocon. Forms a complex with PpiD.

The protein resides in the cell inner membrane. In terms of biological role, may mediate protein transfer from the SecYEG translocon to the periplasmic chaperone network via its periplasmic C-terminal region. This chain is Ancillary SecYEG translocon subunit, found in Neisseria gonorrhoeae (strain ATCC 700825 / FA 1090).